A 430-amino-acid polypeptide reads, in one-letter code: tRNA(Ile)-lysidine synthase (430 aa).

27–32 (SGGSDS) provides a ligand contact to ATP.

This sequence belongs to the tRNA(Ile)-lysidine synthase family.

The protein localises to the cytoplasm. It carries out the reaction cytidine(34) in tRNA(Ile2) + L-lysine + ATP = lysidine(34) in tRNA(Ile2) + AMP + diphosphate + H(+). Functionally, ligates lysine onto the cytidine present at position 34 of the AUA codon-specific tRNA(Ile) that contains the anticodon CAU, in an ATP-dependent manner. Cytidine is converted to lysidine, thus changing the amino acid specificity of the tRNA from methionine to isoleucine. This is tRNA(Ile)-lysidine synthase from Rickettsia bellii (strain OSU 85-389).